We begin with the raw amino-acid sequence, 227 residues long: tRNA (guanine-N(1)-)-methyltransferase (227 aa).

Residues glycine 110 and 129–134 each bind S-adenosyl-L-methionine; that span reads IGDYVL.

Belongs to the RNA methyltransferase TrmD family. Homodimer.

The protein localises to the cytoplasm. It carries out the reaction guanosine(37) in tRNA + S-adenosyl-L-methionine = N(1)-methylguanosine(37) in tRNA + S-adenosyl-L-homocysteine + H(+). Functionally, specifically methylates guanosine-37 in various tRNAs. In Mycoplasmopsis synoviae (strain 53) (Mycoplasma synoviae), this protein is tRNA (guanine-N(1)-)-methyltransferase.